An 88-amino-acid polypeptide reads, in one-letter code: Long neurotoxin LNTX-2 (88 aa).

The N-terminal stretch at 1–21 (MKTLLLTLVVVTIVCLDFGYA) is a signal peptide. 4 disulfides stabilise this stretch: C24/C42, C35/C63, C67/C78, and C79/C84.

It belongs to the three-finger toxin family. Long-chain subfamily. Type II alpha-neurotoxin sub-subfamily. As to expression, expressed by the venom gland.

Its subcellular location is the secreted. In terms of biological role, binds with high affinity to muscular nicotinic acetylcholine receptors (nAChRs), whereas it binds with a low affinity to neuronal alpha-7/CHRNA7 nAChRs. The chain is Long neurotoxin LNTX-2 from Demansia vestigiata (Lesser black whip snake).